The primary structure comprises 349 residues: Galanin receptor type 1 (349 aa).

The Extracellular segment spans residues 1 to 36 (MELAVGNLSEGNASWPEPPAPEPGPLFGIGVENFVT). N7 and N12 each carry an N-linked (GlcNAc...) asparagine glycan. A helical membrane pass occupies residues 37–57 (LVVFGLIFALGVLGNSLVITV). Residues 58 to 70 (LARSKPGKPRSTT) lie on the Cytoplasmic side of the membrane. The chain crosses the membrane as a helical span at residues 71–91 (NLFILNLSIADLAYLLFCIPF). Residues 92–109 (QATVYALPTWVLGAFICK) are Extracellular-facing. Residues C108 and C187 are joined by a disulfide bond. Residues 110 to 131 (FIHYFFTVSMLVSIFTLAAMSV) traverse the membrane as a helical segment. Residues 132–151 (DRYVAIVHSRRSSSLRVSRN) lie on the Cytoplasmic side of the membrane. The chain crosses the membrane as a helical span at residues 152-172 (ALLGVGCIWALSIAMASPVAY). Over 173-200 (HQGLFHPRASNQTFCWEQWPDPRHKKAY) the chain is Extracellular. An N-linked (GlcNAc...) asparagine glycan is attached at N183. Residues 201-221 (VVCTFVFGYLLPLLLICFCYA) form a helical membrane-spanning segment. The Cytoplasmic segment spans residues 222–248 (KVLNHLHKKLKNMSKKSEASKKKTAQT). A helical membrane pass occupies residues 249 to 269 (VLVVVVVFGISWLPHHIIHLW). At 270-271 (AE) the chain is on the extracellular side. Residues 272-292 (FGVFPLTPASFLFRITAHCLA) form a helical membrane-spanning segment. At 293-349 (YSNSSVNPIIYAFLSENFRKAYKQVFKCHIRKDSHLSDTKESKSRIDTPPSTNCTHV) the chain is on the cytoplasmic side. The S-palmitoyl cysteine moiety is linked to residue C320.

Belongs to the G-protein coupled receptor 1 family. As to quaternary structure, interacts with GRP39 AND HTR1A. Palmitoylated on at least one of the three cysteine residues present in the C-terminal part.

It is found in the cell membrane. Its function is as follows. Receptor for the hormone galanin. The activity of this receptor is mediated by G proteins that inhibit adenylate cyclase activity. In Homo sapiens (Human), this protein is Galanin receptor type 1 (GALR1).